The chain runs to 298 residues: 5,10-methylenetetrahydrofolate reductase (298 aa).

Glu28 functions as the Proton donor/acceptor in the catalytic mechanism. Thr59 is a binding site for NADH. The FAD site is built by Tyr60, Ala62, His88, Arg118, Gly119, Asp120, Ala132, Tyr152, His156, Ala159, Asp165, Asn168, and Lys172. Asp120 is a binding site for (6S)-5-methyl-5,6,7,8-tetrahydrofolate. Gln183 serves as a coordination point for NADH. (6S)-5-methyl-5,6,7,8-tetrahydrofolate contacts are provided by Gln183, Gln219, and Arg279.

It belongs to the methylenetetrahydrofolate reductase family. Requires FAD as cofactor.

The catalysed reaction is (6S)-5-methyl-5,6,7,8-tetrahydrofolate + NAD(+) = (6R)-5,10-methylene-5,6,7,8-tetrahydrofolate + NADH + H(+). Its pathway is one-carbon metabolism; tetrahydrofolate interconversion. It participates in amino-acid biosynthesis; L-methionine biosynthesis via de novo pathway. Functionally, catalyzes the NADH-dependent reduction of 5,10-methylenetetrahydrofolate to 5-methyltetrahydrofolate. Is required to provide the methyl group necessary for methionine synthetase to convert homocysteine to methionine; the methyl group is given by 5-methyltetrahydrofolate. This is 5,10-methylenetetrahydrofolate reductase (metF) from Pectobacterium carotovorum subsp. carotovorum (Erwinia carotovora subsp. carotovora).